The chain runs to 541 residues: DEAD-box ATP-dependent RNA helicase 57 (541 aa).

Residues 43 to 52 (VEEEEDTEQP) show a composition bias toward acidic residues. The disordered stretch occupies residues 43–72 (VEEEEDTEQPEAEKVIVSSKKRKRRSSNSV). Residues 141-169 (ELSSRYGCEGYILRNLAELGFKEPTPIQR) carry the Q motif motif. The region spanning 172 to 342 (IPILLSGREC…RSIMHDAVRV (171 aa)) is the Helicase ATP-binding domain. 185-192 (APTGSGKT) serves as a coordination point for ATP. The short motif at 289–292 (DESD) is the DEAD box element. The Helicase C-terminal domain maps to 370-514 (ALRQSFAESL…EVPSWIMSLK (145 aa)). The disordered stretch occupies residues 517–541 (KWRKHRPRRDSISTKPKADKNDTDE). Residues 525-541 (RDSISTKPKADKNDTDE) are compositionally biased toward basic and acidic residues.

The protein belongs to the DEAD box helicase family. DDX52/ROK1 subfamily.

The catalysed reaction is ATP + H2O = ADP + phosphate + H(+). The chain is DEAD-box ATP-dependent RNA helicase 57 (RH57) from Arabidopsis thaliana (Mouse-ear cress).